Here is a 446-residue protein sequence, read N- to C-terminus: Cobalamin biosynthesis protein CbiHC (446 aa).

Residues 1 to 246 (MLLLPSRGKL…MFTPRGYSNK (246 aa)) form a cobalt-factor III C(17)-methyltransferase region. The segment at 247–446 (YNIGEKRRAE…CLIEHADRPD (200 aa)) is cobalt-precorrin-8 methylmutase.

This sequence in the N-terminal section; belongs to the precorrin methyltransferase family. It in the C-terminal section; belongs to the CobH family.

It catalyses the reaction Co(II)-factor III + S-adenosyl-L-methionine + H(+) = Co(II)-factor IV + S-adenosyl-L-homocysteine. The enzyme catalyses Co-precorrin-8X = cob(II)yrinate. Its pathway is cofactor biosynthesis; adenosylcobalamin biosynthesis; cob(II)yrinate a,c-diamide from sirohydrochlorin (anaerobic route): step 3/10. The protein operates within cofactor biosynthesis; adenosylcobalamin biosynthesis; cob(II)yrinate a,c-diamide from sirohydrochlorin (anaerobic route): step 9/10. Bifunctional enzyme with a methyltransferase domain that catalyzes the ring contraction and methylation of C-17 in cobalt-factor III to form cobalt-factor IV, and an isomerase domain that catalyzes the conversion of cobalt-precorrin-8 to cobyrinate. This Archaeoglobus fulgidus (strain ATCC 49558 / DSM 4304 / JCM 9628 / NBRC 100126 / VC-16) protein is Cobalamin biosynthesis protein CbiHC (cbiHC).